Consider the following 109-residue polypeptide: Biphenyl dioxygenase system ferredoxin subunit (109 aa).

The region spanning 4-100 is the Rieske domain; the sequence is TRVCDRRDVP…IRIEDNDVLV (97 aa). [2Fe-2S] cluster-binding residues include C43, H45, C63, and H66.

It belongs to the bacterial ring-hydroxylating dioxygenase ferredoxin component family. This dioxygenase system consists of four proteins: the two subunits of the hydroxylase component (BphA and BphE), a ferredoxin (BphF) and a ferredoxin reductase (BphG).

In terms of biological role, this protein seems to be a 2Fe-2S ferredoxin. This Paraburkholderia xenovorans (strain LB400) protein is Biphenyl dioxygenase system ferredoxin subunit (bphF).